Reading from the N-terminus, the 430-residue chain is MPILEQVGAREILDSRGNPTVEVEVALTDGTFARAAVPSGASTGEHEAVELRDGDARYGGKGVTKAVNAVLDEIAPAIIGESADDQRLIDQALLDLDGTPDKSRLGANAILGVSLAVAKAAADSAGLALFRYLGGPNAHILPVPMMNILNGGAHADTGVDVQEFMVAPIGAPSFKESLRWGTEVYHSLKSVLKKQGLSTGLGDEGGFAPDVAGTRAALDLISTAIEATGLKLGADVALALDVAATEFYSAADGYSFEKEKRTAEQMGAFYAELLDAYPLVSIEDPLSEDDWDGWVALTTAIGDRVQLVGDDLFVTNPERLEEGIERGAANALLVKVNQIGTLTETLDAVTLAHSSGYKTMMSHRSGETEDTTIADLAVAVGSGQIKTGAPARSERVAKYNQLLRIEETLGDAARFAGDLAFPRFSIEPAN.

Gln-162 provides a ligand contact to (2R)-2-phosphoglycerate. Glu-204 acts as the Proton donor in catalysis. Mg(2+) is bound by residues Asp-241, Glu-283, and Asp-310. Positions 335, 364, 365, and 386 each coordinate (2R)-2-phosphoglycerate. The Proton acceptor role is filled by Lys-335.

This sequence belongs to the enolase family. Mg(2+) serves as cofactor.

It localises to the cytoplasm. The protein resides in the secreted. It is found in the cell surface. It carries out the reaction (2R)-2-phosphoglycerate = phosphoenolpyruvate + H2O. Its pathway is carbohydrate degradation; glycolysis; pyruvate from D-glyceraldehyde 3-phosphate: step 4/5. Catalyzes the reversible conversion of 2-phosphoglycerate (2-PG) into phosphoenolpyruvate (PEP). It is essential for the degradation of carbohydrates via glycolysis. This is Enolase from Mycobacteroides abscessus (strain ATCC 19977 / DSM 44196 / CCUG 20993 / CIP 104536 / JCM 13569 / NCTC 13031 / TMC 1543 / L948) (Mycobacterium abscessus).